A 387-amino-acid chain; its full sequence is 3-ketoacyl-CoA thiolase (387 aa).

Cys91 acts as the Acyl-thioester intermediate in catalysis. Catalysis depends on proton acceptor residues His343 and Cys373.

It belongs to the thiolase-like superfamily. Thiolase family. Heterotetramer of two alpha chains (FadB) and two beta chains (FadA).

The protein localises to the cytoplasm. The enzyme catalyses an acyl-CoA + acetyl-CoA = a 3-oxoacyl-CoA + CoA. Its pathway is lipid metabolism; fatty acid beta-oxidation. In terms of biological role, catalyzes the final step of fatty acid oxidation in which acetyl-CoA is released and the CoA ester of a fatty acid two carbons shorter is formed. The sequence is that of 3-ketoacyl-CoA thiolase from Shewanella sp. (strain W3-18-1).